A 203-amino-acid chain; its full sequence is Glycerol-3-phosphate acyltransferase (203 aa).

Helical transmembrane passes span 6–26 (LTLAMILTAYLAGSISSAVLV), 56–76 (AAAMVLLFDMLKGAVPAYVAF), 82–102 (AVSLGVIAIAACLGHIFPIFF), 118–138 (APIGADLSLALIATWVIVVLI), and 141–161 (YSSLAAIVTALLAPAYTWYFD).

The protein belongs to the PlsY family. In terms of assembly, probably interacts with PlsX.

The protein resides in the cell inner membrane. It catalyses the reaction an acyl phosphate + sn-glycerol 3-phosphate = a 1-acyl-sn-glycero-3-phosphate + phosphate. It participates in lipid metabolism; phospholipid metabolism. Its function is as follows. Catalyzes the transfer of an acyl group from acyl-phosphate (acyl-PO(4)) to glycerol-3-phosphate (G3P) to form lysophosphatidic acid (LPA). This enzyme utilizes acyl-phosphate as fatty acyl donor, but not acyl-CoA or acyl-ACP. This Shewanella loihica (strain ATCC BAA-1088 / PV-4) protein is Glycerol-3-phosphate acyltransferase.